The following is a 566-amino-acid chain: Hexose transporter 2 (566 aa).

The tract at residues 1 to 39 (MSELETGTAAHGTPVENKSVSSSQASTPTNVGSRDDLKV) is disordered. The segment covering 16–32 (ENKSVSSSQASTPTNVG) has biased composition (polar residues). The Cytoplasmic segment spans residues 22–61 (SSQASTPTNVGSRDDLKVDDDNHSVDAIELPKKPRSAYIT). The chain crosses the membrane as a helical span at residues 62 to 82 (VSILCLMVAFGGFVFGWDTGT). Topologically, residues 83 to 112 (ISGFVNQTDFIRRFGQEKADGSHYLSNVRT) are extracellular. N-linked (GlcNAc...) asparagine glycosylation is present at N88. Residues 113 to 133 (GLIVSIFNIGCAIGGIILSKL) traverse the membrane as a helical segment. The Cytoplasmic portion of the chain corresponds to 134–140 (GDMYGRR). A helical membrane pass occupies residues 141-161 (IGLMIVVLIYVVGIIIQIASI). At 162 to 166 (DKWYQ) the chain is on the extracellular side. A helical membrane pass occupies residues 167–187 (YFIGRIISGLGVGGISVLSPM). Topologically, residues 188 to 198 (LISETAPKHIR) are cytoplasmic. The chain crosses the membrane as a helical span at residues 199–219 (GTLVSFYQLMITFGIFLGYCT). Residues 220-233 (NYGTKTYSNSVQWR) lie on the Extracellular side of the membrane. Residues 234–254 (VPLGLCFAWAIFMITGMLFVP) form a helical membrane-spanning segment. The Cytoplasmic portion of the chain corresponds to 255–333 (ESPRFLVEKD…MGMLIQSFQQ (79 aa)). Residues 334–353 (LTGNNYFFYYGTTIFNSVGM) traverse the membrane as a helical segment. Residues 354–357 (DDSF) lie on the Extracellular side of the membrane. A helical transmembrane segment spans residues 358-378 (ETSIVLGIVNFASTFVAIYVV). The Cytoplasmic portion of the chain corresponds to 379 to 385 (DKFGRRK). A helical membrane pass occupies residues 386-406 (CLLWGAAAMTACMVVFASVGV). At 407-428 (TRLWPDGANHPETASKGAGNCM) the chain is on the extracellular side. A helical membrane pass occupies residues 429 to 449 (IVFACFYIFCFATSWAPIAYV). Residues 450–465 (VVAESYPLRVKAKCMA) are Cytoplasmic-facing. The chain crosses the membrane as a helical span at residues 466–486 (IATASNWIWGFLNGFFTPFIT). At 487-492 (SAIHFY) the chain is on the extracellular side. The chain crosses the membrane as a helical span at residues 493–513 (YGYVFMGCLVAMFFYVFFFVP). Over 514-566 (ETKGLTLEEVQEMWEEGVLPWKSSSWVPSSRRNAGYDVDALQHDEKPWYKAML) the chain is Cytoplasmic.

The protein belongs to the major facilitator superfamily. Sugar transporter (TC 2.A.1.1) family.

It is found in the membrane. Probable glucose transporter. The sequence is that of Hexose transporter 2 (KHT2) from Kluyveromyces lactis (Yeast).